The following is an 833-amino-acid chain: A disintegrin and metalloproteinase with thrombospondin motifs 4 (833 aa).

A signal peptide spans 1-49; sequence MSQMGLHPRRGLTGHWLQRFQPCLPLHTVQWRRLLLLAFLLSLAWPASP. A propeptide spanning residues 50–208 is cleaved from the precursor; that stretch reads LPREEEIVFP…PSPISRRTKR (159 aa). N-linked (GlcNAc...) asparagine glycosylation occurs at Asn63. Residues 180–204 form a disordered region; it reads KSPASSQGPMCTVKAPSGSPSPISR. Positions 188-195 match the Cysteine switch motif; that stretch reads PMCTVKAP. Cys190 contributes to the Zn(2+) binding site. The 211-residue stretch at 214–424 folds into the Peptidase M12B domain; that stretch reads RFVETLVVAD…GYGHCLLDKP (211 aa). 11 cysteine pairs are disulfide-bonded: Cys289/Cys341, Cys318/Cys323, Cys335/Cys419, Cys373/Cys403, Cys445/Cys468, Cys456/Cys478, Cys463/Cys497, Cys491/Cys502, Cys528/Cys565, Cys532/Cys570, and Cys543/Cys555. Asn299 is a glycosylation site (N-linked (GlcNAc...) asparagine). Residue His357 participates in Zn(2+) binding. The active site involves Glu358. Residues His361 and His367 each coordinate Zn(2+). A Disintegrin domain is found at 433–515; sequence TFPGKDYDAD…DQLKDFNVPQ (83 aa). The 56-residue stretch at 516–571 folds into the TSP type-1 domain; sequence AGGWGPWGPWGDCSRTCGGGVQFSSRDCTRPVPRNGGKYCEGRRTRFRSCNTENCP. The segment at 682-833 is spacer; that stretch reads SKQSGSFKKF…LRKRPWAGRK (152 aa).

As to quaternary structure, interacts with SRPX2. The cofactor is Zn(2+). Post-translationally, the precursor is cleaved by a furin endopeptidase. Glycosylated. Can be O-fucosylated by POFUT2 on a serine or a threonine residue found within the consensus sequence C1-X(2)-(S/T)-C2-G of the TSP type-1 repeat domains where C1 and C2 are the first and second cysteine residue of the repeat, respectively. Fucosylated repeats can then be further glycosylated by the addition of a beta-1,3-glucose residue by the glucosyltransferase, B3GALTL. Fucosylation mediates the efficient secretion of ADAMTS family members. Can also be C-glycosylated with one or two mannose molecules on tryptophan residues within the consensus sequence W-X-X-W of the TPRs, and N-glycosylated. These other glycosylations can also facilitate secretion.

The protein localises to the secreted. It is found in the extracellular space. It localises to the extracellular matrix. It catalyses the reaction Glutamyl endopeptidase. Bonds cleaved include 370-Thr-Glu-Gly-Glu-|-Ala-Arg-Gly-Ser-377 in the interglobular domain of mammalian aggrecan.. Cleaves aggrecan, a cartilage proteoglycan, at the '392-Glu-|-Ala-393' site and may be involved in its turnover. Also cleaves COMP. May play an important role in the destruction of aggrecan in arthritic diseases. The polypeptide is A disintegrin and metalloproteinase with thrombospondin motifs 4 (Adamts4) (Mus musculus (Mouse)).